The sequence spans 130 residues: Phosphoribosyl-AMP cyclohydrolase 1 (130 aa).

Asp-77 contacts Mg(2+). Position 78 (Cys-78) interacts with Zn(2+). Mg(2+) is bound by residues Asp-79 and Asp-81. Zn(2+)-binding residues include Cys-95 and Cys-102.

It belongs to the PRA-CH family. In terms of assembly, homodimer. Mg(2+) serves as cofactor. It depends on Zn(2+) as a cofactor.

It localises to the cytoplasm. It carries out the reaction 1-(5-phospho-beta-D-ribosyl)-5'-AMP + H2O = 1-(5-phospho-beta-D-ribosyl)-5-[(5-phospho-beta-D-ribosylamino)methylideneamino]imidazole-4-carboxamide. It participates in amino-acid biosynthesis; L-histidine biosynthesis; L-histidine from 5-phospho-alpha-D-ribose 1-diphosphate: step 3/9. Functionally, catalyzes the hydrolysis of the adenine ring of phosphoribosyl-AMP. The chain is Phosphoribosyl-AMP cyclohydrolase 1 from Pseudomonas fluorescens (strain ATCC BAA-477 / NRRL B-23932 / Pf-5).